Reading from the N-terminus, the 809-residue chain is 3',5'-cyclic-AMP phosphodiesterase 4D (809 aa).

The segment at 1-107 (MEAEGSSAPA…SGATGRVRHR (107 aa)) is disordered. Residues His-54, Pro-59, and Pro-63 each carry the phosphoserine modification. A compositionally biased stretch (pro residues) spans 58 to 89 (PPPPPPSPQPQPQCPLQPPPPPPLPPPPPPPG). A compositionally biased stretch (low complexity) spans 90-102 (AARGRYASSGATG). 5 positions are modified to phosphoserine: Ser-142, Ser-299, Ser-301, Ser-348, and Ser-375. The disordered stretch occupies residues 343–364 (EVEIPSPTQKEKEKKKRPMSQI). The 330-residue stretch at 386–715 (VKTEQEDVLA…EWYQSTIPQS (330 aa)) folds into the PDEase domain. Lys-387 participates in a covalent cross-link: Glycyl lysine isopeptide (Lys-Gly) (interchain with G-Cter in SUMO). The Proton donor role is filled by His-462. His-462 is a binding site for 3',5'-cyclic AMP. His-462 serves as a coordination point for AMP. His-466, His-502, Asp-503, and Asp-620 together coordinate Zn(2+). Asp-503, Asp-620, Asn-623, Gln-671, and Phe-674 together coordinate AMP. Asp-503 provides a ligand contact to Mg(2+). Asp-503 is a Mn(2+) binding site. 3',5'-cyclic AMP contacts are provided by Gln-671 and Phe-674. 2 disordered regions span residues 710 to 729 (STIP…GRQG) and 739 to 809 (TLEE…SPDT). A compositionally biased stretch (polar residues) spans 762–773 (CSDSKTLCTQDS). The span at 779-796 (PLDEQVEEEAVGEEEESQ) shows a compositional bias: acidic residues.

Belongs to the cyclic nucleotide phosphodiesterase family. PDE4 subfamily. Homodimer for the long isoforms. Isoforms with truncated N-termini are monomeric. Isoform 3 is part of a ternary complex containing PRKAR2A, PRKAR2B and AKAP9. Interacts with PDE4DIP. Identified in a complex composed of RYR1, PDE4D, PKA, FKBP1A and protein phosphatase 1 (PP1). Isoform 5, isoform N3 and isoform 12 bind RACK1 via their unique N-terminus. Binds ARRB2. Interacts (via N-terminal region) with SHANK2 (via proline-rich region); the interaction is increased in a PKA-dependent manner. The cofactor is Zn(2+). Mg(2+) is required as a cofactor. Mn(2+) serves as cofactor. Post-translationally, long isoforms that share a conserved PKA phosphorylation site in the N-terminus are activated by PKA through phosphorylation. Isoform 3 and isoform 7 are activated by phosphorylation (in vitro), but not isoform 6. Isoform N3 and isoform 12 are phosphorylated on Ser-49, Ser-51, Ser-55 and Ser-59. In terms of processing, sumoylation of long isoforms by PIAS4 augments their activation by PKA phosphorylation and represses their inhibition by ERK phosphorylation. In terms of tissue distribution, expressed in colonic epithelial cells (at protein level). Widespread; most abundant in skeletal muscle. Detected in brain. As to expression, detected in brain, placenta, lung and kidney. In terms of tissue distribution, detected in heart and skeletal muscle.

The protein localises to the apical cell membrane. Its subcellular location is the cytoplasm. The protein resides in the membrane. It is found in the cytoskeleton. It localises to the microtubule organizing center. The protein localises to the centrosome. It catalyses the reaction 3',5'-cyclic AMP + H2O = AMP + H(+). It participates in purine metabolism; 3',5'-cyclic AMP degradation; AMP from 3',5'-cyclic AMP: step 1/1. Its activity is regulated as follows. Inhibited by rolipram. Activated by phosphatidic acid. Its function is as follows. Hydrolyzes the second messenger cAMP, which is a key regulator of many important physiological processes. The sequence is that of 3',5'-cyclic-AMP phosphodiesterase 4D from Homo sapiens (Human).